We begin with the raw amino-acid sequence, 135 residues long: MLSPKRTRFRKQHRGRMKGTSYRGNHISFGRYALQALEPSWITARQIEAGRRAISRYARRGGKIWVRLFPDKPVTLRPAETRMGSGKGSPEYWVSVVKPGRILYEIGGVSENVARTAMLLAASKMPIRTQFIIEG.

Residues M1–M17 show a composition bias toward basic residues. The tract at residues M1–T20 is disordered.

It belongs to the universal ribosomal protein uL16 family. Part of the 50S ribosomal subunit.

It is found in the plastid. The protein resides in the chloroplast. This is Large ribosomal subunit protein uL16c from Lemna minor (Common duckweed).